We begin with the raw amino-acid sequence, 630 residues long: Neuronal acetylcholine receptor subunit alpha-4 (630 aa).

Residues 1–30 (MANSGTGAPPPLLLLPLLLLLGTGLLPASS) form the signal peptide. Residues 32-249 (IETRAHAEER…IIRRLPLFYT (218 aa)) lie on the Extracellular side of the membrane. Asn-59 is a glycosylation site (N-linked (GlcNAc...) asparagine). Positions 78 and 80 each coordinate Ca(2+). 2 N-linked (GlcNAc...) asparagine glycosylation sites follow: Asn-109 and Asn-176. Disulfide bonds link Cys-163/Cys-177 and Cys-227/Cys-228. The chain crosses the membrane as a helical span at residues 250 to 270 (INLIIPCLLISCLTVLVFYLP). Cys-273 carries the S-palmitoyl cysteine lipid modification. Transmembrane regions (helical) follow at residues 279 to 299 (LCIS…EIIP) and 313 to 333 (LLFT…VLNV). Residues 334 to 604 (HHRSPRTHTM…WKYVAMVIDR (271 aa)) lie on the Cytoplasmic side of the membrane. 2 disordered regions span residues 418 to 463 (TAVE…SGAP) and 505 to 526 (SLAD…SQLP). A Phosphoserine modification is found at Ser-428. Residues 434-443 (PDLKTSEVEK) are compositionally biased toward basic and acidic residues. The segment covering 447-457 (CPSPGSCPPPK) has biased composition (pro residues). A phosphoserine mark is found at Ser-542 and Ser-545. Residues 605-625 (IFLWMFIIVCLLGTVGLFLPP) form a helical membrane-spanning segment.

This sequence belongs to the ligand-gated ion channel (TC 1.A.9) family. Acetylcholine receptor (TC 1.A.9.1) subfamily. Alpha-4/CHRNA4 sub-subfamily. In terms of assembly, neuronal AChR is composed of two different types of subunits: alpha and beta. CHRNA4 forms heteropentameric neuronal acetylcholine receptors with CHRNB2 and CHRNB4, as well as CHRNA5 and CHRNB3 as accesory subunits. Found in two major stoichiometric forms, LS (low agonist sensitivity): (CHRNA4)3:(CHRNB2)2 and HS (high agonist sensitivity): (CHRNA4)2:(CHRNB2)3, the two stoichiometric forms differ in their unitary conductance, calcium permeability, ACh sensitivity and potentiation by divalent cation. Cells produce predominantly an (CHRNA4)3:(CHRNB2)2 nAChR. The (CHRNA4)2:(CHRNB2)3 expression is selectively up-regulated by nicotine and has lower single channel conductance and calcium permeability. In the striatum, also forms CHRNA4:CHRNA6:CHRNB2 complexes. Also found in the stoichiometric form: (CHRNA4:CHRNB2)2:CHRNB3. Interacts with RIC3; which is required for proper folding and assembly. Interacts with LYPD6. As to expression, in various regions of the central nervous system. Expressed in hippocampal neurons.

It localises to the presynaptic cell membrane. The protein resides in the cell membrane. The catalysed reaction is Ca(2+)(in) = Ca(2+)(out). It catalyses the reaction K(+)(in) = K(+)(out). The enzyme catalyses Na(+)(in) = Na(+)(out). Activated by a myriad of ligands such as acetylcholine, cytisine, nicotine, choline and epibatidine. Channel potentiation by calcium is stoichiometry-selective, CHRNA4:CHRNB2 nACh receptor is achieved by calcium association with topographically distinct sites framed by anionic residues within the CHRNA4 subunit and between the CHRNA4 and CHRNB2 subunits. nAChR activity is inhibited by the antagonist alpha-conotoxins BuIA, PnIA, GID and MII, small disulfide-constrained peptides from cone snails. In terms of biological role, component of neuronal acetylcholine receptors (nAChRs) that function as pentameric, ligand-gated cation channels with high calcium permeability among other activities. nAChRs are excitatory neurotrasnmitter receptors formed by a collection of nAChR subunits known to mediate synaptic transmission in the nervous system and the neuromuscular junction. Each nAchR subunit confers differential attributes to channel properties, including activation, deactivation and desensitization kinetics, pH sensitivity, cation permeability, and binding to allosteric modulators. CHRNA4 forms heteropentameric neuronal acetylcholine receptors with CHRNB2 and CHRNB4, as well as CHRNA5 and CHRNB3 as accesory subunits. Is the most abundant nAChR subtype expressed in the central nervous system. Found in two major stoichiometric forms,(CHRNA4)3:(CHRNB2)2 and (CHRNA4)2:(CHRNB2)3, the two stoichiometric forms differ in their unitary conductance, calcium permeability, ACh sensitivity and potentiation by divalent cation. Involved in the modulation of calcium-dependent signaling pathways, influences the release of neurotransmitters, including dopamine, glutamate and GABA. This chain is Neuronal acetylcholine receptor subunit alpha-4 (Chrna4), found in Rattus norvegicus (Rat).